The chain runs to 902 residues: Glutamate receptor 4 (902 aa).

Residues 1 to 20 (MRIICRQIVLLFSGFWGLAM) form the signal peptide. The Extracellular portion of the chain corresponds to 22–544 (AFPSSVQIGG…GVFSFLDPLA (523 aa)). Residues asparagine 52, asparagine 56, asparagine 258, asparagine 371, asparagine 407, and asparagine 414 are each glycosylated (N-linked (GlcNAc...) asparagine). Cysteines 84 and 331 form a disulfide. Proline 500, threonine 502, and arginine 507 together coordinate L-glutamate. Residues 545–565 (YEIWMCIVFAYIGVSVVLFLV) form a helical membrane-spanning segment. The Cytoplasmic segment spans residues 566–592 (SRFSPYEWHTEEPEDGKEGPSDQPPNE). The helical; Pore-forming intramembrane region spans 593-608 (FGIFNSLWFSLGAFMQ). Residues 609 to 611 (QGC) lie within the membrane without spanning it. A lipid anchor (S-palmitoyl cysteine) is attached at cysteine 611. Topologically, residues 612 to 617 (DISPRS) are cytoplasmic. Residues 618–638 (LSGRIVGGVWWFFTLIIISSY) form a helical membrane-spanning segment. Topologically, residues 639-813 (TANLAAFLTV…DKTSALSLSN (175 aa)) are extracellular. Residues serine 676, threonine 677, and glutamate 727 each contribute to the L-glutamate site. The cysteines at positions 740 and 795 are disulfide-linked. Residues 814-834 (VAGVFYILVGGLGLAMLVALI) traverse the membrane as a helical segment. The Cytoplasmic segment spans residues 835–902 (EFCYKSRAEA…GLAVIASDLP (68 aa)). Residue cysteine 837 is the site of S-palmitoyl cysteine attachment. Phosphoserine is present on serine 862.

Belongs to the glutamate-gated ion channel (TC 1.A.10.1) family. GRIA4 subfamily. Homotetramer or heterotetramer of pore-forming glutamate receptor subunits. Tetramers may be formed by the dimerization of dimers. Interacts with EPB41L1 via its C-terminus. Isoform 3 interacts with PICK1. Found in a complex with GRIA1, GRIA2, GRIA3, CNIH2, CNIH3, CACNG2, CACNG3, CACNG4, CACNG5, CACNG7 and CACNG8. Interacts with CACNG5 and PRKCG. Found in a complex with GRIA1, GRIA2, GRIA3, DLG4, CACNG8 and CNIH2. In terms of processing, palmitoylated. Depalmitoylated upon L-glutamate stimulation. ZDHHC3/GODZ specifically palmitoylates Cys-611, which leads to Golgi retention and decreased cell surface expression. In contrast, Cys-837 palmitoylation does not affect cell surface expression but regulates stimulation-dependent endocytosis. Post-translationally, phosphorylated at Ser-862 by PRKCG; phosphorylation increases plasma membrane-associated GRI4 expression.

It is found in the cell membrane. The protein resides in the postsynaptic cell membrane. Its subcellular location is the cell projection. It localises to the dendrite. It catalyses the reaction Ca(2+)(in) = Ca(2+)(out). It carries out the reaction Na(+)(in) = Na(+)(out). The catalysed reaction is Mg(2+)(in) = Mg(2+)(out). In terms of biological role, ionotropic glutamate receptor that functions as a ligand-gated cation channel, gated by L-glutamate and glutamatergic agonists such as alpha-amino-3-hydroxy-5-methyl-4-isoxazolepropionic acid (AMPA), quisqualic acid, and kainic acid. L-glutamate acts as an excitatory neurotransmitter at many synapses in the central nervous system and plays an important role in fast excitatory synaptic transmission. Binding of the excitatory neurotransmitter L-glutamate induces a conformation change, leading to the opening of the cation channel, and thereby converts the chemical signal to an electrical impulse upon entry of monovalent and divalent cations such as sodium and calcium. The receptor then desensitizes rapidly and enters a transient inactive state, characterized by the presence of bound agonist. In the presence of CACNG8, shows resensitization which is characterized by a delayed accumulation of current flux upon continued application of L-glutamate. This Mus musculus (Mouse) protein is Glutamate receptor 4.